Consider the following 890-residue polypeptide: UPF0182 protein SYNW1212 (890 aa).

8 helical membrane-spanning segments follow: residues 21–41 (WLLQ…AIRW), 64–84 (LTLL…NGLI), 98–118 (WQVS…LVAV), 134–154 (AVVL…SIPL), 173–193 (FAAL…CLGN), 219–239 (RLLM…CWLS), 268–288 (LLTV…SLLL), and 295–315 (VLAV…WLIL).

Belongs to the UPF0182 family.

It is found in the cell membrane. This is UPF0182 protein SYNW1212 from Parasynechococcus marenigrum (strain WH8102).